A 130-amino-acid chain; its full sequence is Endoglucanase 2 (130 aa).

Residues H47, D98, and E107 contribute to the active site.

The protein belongs to the glycosyl hydrolase 9 (cellulase E) family.

The catalysed reaction is Endohydrolysis of (1-&gt;4)-beta-D-glucosidic linkages in cellulose, lichenin and cereal beta-D-glucans.. Functionally, involved in ripening fruit process. The sequence is that of Endoglucanase 2 (CEL2) from Persea americana (Avocado).